Reading from the N-terminus, the 352-residue chain is UDP-N-acetylglucosamine--N-acetylmuramyl-(pentapeptide) pyrophosphoryl-undecaprenol N-acetylglucosamine transferase (352 aa).

Residues threonine 14–glycine 16, asparagine 124, arginine 164, serine 185, and glutamine 285 contribute to the UDP-N-acetyl-alpha-D-glucosamine site.

It belongs to the glycosyltransferase 28 family. MurG subfamily.

It is found in the cell inner membrane. The catalysed reaction is di-trans,octa-cis-undecaprenyl diphospho-N-acetyl-alpha-D-muramoyl-L-alanyl-D-glutamyl-meso-2,6-diaminopimeloyl-D-alanyl-D-alanine + UDP-N-acetyl-alpha-D-glucosamine = di-trans,octa-cis-undecaprenyl diphospho-[N-acetyl-alpha-D-glucosaminyl-(1-&gt;4)]-N-acetyl-alpha-D-muramoyl-L-alanyl-D-glutamyl-meso-2,6-diaminopimeloyl-D-alanyl-D-alanine + UDP + H(+). Its pathway is cell wall biogenesis; peptidoglycan biosynthesis. Cell wall formation. Catalyzes the transfer of a GlcNAc subunit on undecaprenyl-pyrophosphoryl-MurNAc-pentapeptide (lipid intermediate I) to form undecaprenyl-pyrophosphoryl-MurNAc-(pentapeptide)GlcNAc (lipid intermediate II). The polypeptide is UDP-N-acetylglucosamine--N-acetylmuramyl-(pentapeptide) pyrophosphoryl-undecaprenol N-acetylglucosamine transferase (Chlamydia trachomatis serovar A (strain ATCC VR-571B / DSM 19440 / HAR-13)).